A 507-amino-acid chain; its full sequence is Glycine, alanine and asparagine-rich protein (507 aa).

A signal peptide spans 1–17 (MLRVPLLVLCLALSVGA). A coiled-coil region spans residues 158–185 (SAQALASATAELQAAQDAYDQASAYAEA). Residues 462–498 (GNGNGGNGRNGNGGNGRNGNGGNGGNGNGRNGRGGRY) are compositionally biased toward gly residues. Positions 462-507 (GNGNGGNGRNGNGGNGRNGNGGNGGNGNGRNGRGGRYYYGSSDYYY) are disordered.

As to expression, component of the acid-soluble and acid-insoluble organic matrix of calcified shell layers (at protein level).

The protein localises to the secreted. The sequence is that of Glycine, alanine and asparagine-rich protein from Haliotis asinina (Donkey's ear abalone).